The sequence spans 61 residues: Large ribosomal subunit protein uL30 (61 aa).

Belongs to the universal ribosomal protein uL30 family. In terms of assembly, part of the 50S ribosomal subunit.

The chain is Large ribosomal subunit protein uL30 from Shewanella halifaxensis (strain HAW-EB4).